The chain runs to 244 residues: 3-deoxy-manno-octulosonate cytidylyltransferase (244 aa).

This sequence belongs to the KdsB family.

It is found in the cytoplasm. The catalysed reaction is 3-deoxy-alpha-D-manno-oct-2-ulosonate + CTP = CMP-3-deoxy-beta-D-manno-octulosonate + diphosphate. The protein operates within nucleotide-sugar biosynthesis; CMP-3-deoxy-D-manno-octulosonate biosynthesis; CMP-3-deoxy-D-manno-octulosonate from 3-deoxy-D-manno-octulosonate and CTP: step 1/1. It participates in bacterial outer membrane biogenesis; lipopolysaccharide biosynthesis. Its function is as follows. Activates KDO (a required 8-carbon sugar) for incorporation into bacterial lipopolysaccharide in Gram-negative bacteria. This is 3-deoxy-manno-octulosonate cytidylyltransferase from Anaeromyxobacter sp. (strain Fw109-5).